Consider the following 463-residue polypeptide: Perilipin-5 (463 aa).

The tract at residues 1–32 (MDQRGEDTTLAPHSRMSGDQTAQDPGSSLGEL) is disordered. The interval 1-123 (MDQRGEDTTL…KLEEKLPFLQ (123 aa)) is interaction with LIPE. Residues 1–188 (MDQRGEDTTL…RFLPMTEAEL (188 aa)) form an essential for lipid droplet targeting region. A phosphoserine mark is found at Ser-17, Ser-163, and Ser-337. The segment covering 17–26 (SGDQTAQDPG) has biased composition (polar residues). Residues 200–463 (VGTVEEQRQQ…KHTMMPELDF (264 aa)) form an interaction with PNPLA2 and ABHD5 region. Residues 433–463 (AWEAESADPGGQEAEPPRGQGKHTMMPELDF) form a disordered region. The tract at residues 444–463 (QEAEPPRGQGKHTMMPELDF) is necessary for mitochondria recruitment at the lipid droplet surface.

The protein belongs to the perilipin family. As to quaternary structure, homooligomer. Interacts with PNPLA2; prevents interaction of PNPLA2 with ABHD5. Interacts with ABHD5; targets ABHD5 to lipid droplets and promotes interaction of ABHD5 with PNPLA2. Interacts with LIPE. Post-translationally, phosphorylated by PKA. Phosphorylated on serine in skeletal muscle at rest or with lipolytic stimulation. In terms of tissue distribution, highly expressed in oxidative tissues, including heart, liver, brown adipose tissue (BAT) and slow-twitch fibers of skeletal muscle. Lower expression in epididymal white adipose tissue and anterior tibialis and quadriceps. Expressed in adrenal glands. Isoform 2 has the highest expression in heart.

It localises to the lipid droplet. Its subcellular location is the cytoplasm. The protein resides in the mitochondrion. Functionally, lipid droplet-associated protein that maintains the balance between lipogenesis and lipolysis and also regulates fatty acid oxidation in oxidative tissues. Recruits mitochondria to the surface of lipid droplets and is involved in lipid droplet homeostasis by regulating both the storage of fatty acids in the form of triglycerides and the release of fatty acids for mitochondrial fatty acid oxidation. In lipid droplet triacylglycerol hydrolysis, plays a role as a scaffolding protein for three major key lipolytic players: ABHD5, PNPLA2 and LIPE. Reduces the triacylglycerol hydrolase activity of PNPLA2 by recruiting and sequestering PNPLA2 to lipid droplets. Phosphorylation by PKA enables lipolysis probably by promoting release of ABHD5 from the perilipin scaffold and by facilitating interaction of ABHD5 with PNPLA2. Also increases lipolysis through interaction with LIPE and upon PKA-mediated phosphorylation of LIPE. The sequence is that of Perilipin-5 (Plin5) from Mus musculus (Mouse).